A 213-amino-acid chain; its full sequence is Putative glutathione-dependent formaldehyde-activating enzyme (213 aa).

A CENP-V/GFA domain is found at 19–165; it reads FPGGTLKCLC…FRELGLETYD (147 aa). Zn(2+) contacts are provided by Cys26, Cys28, Cys47, Cys49, Cys52, Cys94, and Cys97.

Belongs to the Gfa family. Zn(2+) is required as a cofactor.

It carries out the reaction S-(hydroxymethyl)glutathione = glutathione + formaldehyde. Its pathway is one-carbon metabolism; formaldehyde degradation; formate from formaldehyde (glutathione route): step 1/3. Catalyzes the condensation of formaldehyde and glutathione to S-hydroxymethylglutathione. The chain is Putative glutathione-dependent formaldehyde-activating enzyme from Podospora anserina (strain S / ATCC MYA-4624 / DSM 980 / FGSC 10383) (Pleurage anserina).